A 524-amino-acid chain; its full sequence is Probable cytochrome P450 519C1 (524 aa).

A helical transmembrane segment spans residues 1 to 21; that stretch reads MNILLLIFYFLVCFLIFDFIK. A heme-binding site is contributed by cysteine 470.

This sequence belongs to the cytochrome P450 family. Heme serves as cofactor.

Its subcellular location is the membrane. This Dictyostelium discoideum (Social amoeba) protein is Probable cytochrome P450 519C1 (cyp519C1).